The sequence spans 1308 residues: MAGLAQHIQLKYIFGMNNEIRNSLQFHDEDRIIYPAGYNVVLHDLNDKSQHYYQGTNEYRGISCLALSPLKRYLALGVKGQRDPAIIIFDTFTQKRRKNLGLNLGNLDRYNIKQWVSIAFPSQNQETKYIFSLSGAGGDVVLCWWWHEKGKCLGSIDLGAQNDIYEISFNHSDANSICVTGNNFFGIYAKIEGTYVREDNQQKQKPSVQNGENSSAAQLPQPTLNIQVSAGNNNQNPQPEIKLENGNLISNLPADIVEKNFVAHLWMQCESYLVVFVESGEIILCDSRGNFLQIMEQSPRYFIVSRSGMIKIVAAVAYSKGFYVACSESIVLQYHYTQDNDKNPFTCVNQFKLKQFVELKEIEIKSICMNKAEDKLLIGLDNNQIYEIKIKPYHPETVNNDSSEDREVTLINHLNHTGPINSMDICKRKPIIATCSTDKTIKIWDYEKKQIKISWAFNEEAFCLSLHPQGFCVAVGFLDKLRLMNLCIHNSQNTTKNKAYKEISPFKGCKEIKFSNGGQYFAAVNSTSSNHVIQVFKFFTGENPSQLVFKGHTGRVKCIAWSSDDSFLLSCGLDGMILAWKLDQDFQHQQTIVPRIVDIHNKGVNFSGLTLTVDNKTIVAVGNDRHIHQAVINEQQPVDKTDKKLLDINLSCLAFPSSNKLLFAGIQDDARSSGAIRCFIYPLTHGKFTDYQAHDERGVEKMKITNDDRYIITAGKDGCIMVFEIKDKDARGMKLKDGYAKYSEEELITRSDLDDLKSTRDGLIVQINEFSNQNAMIGLNSRDDRIRQLETQIENNSQKRKQMFEQLLKSKTMEEQKLIQEINEIKEQFEQEIQVMDTKYQKEVMSLVEEYENQKRLHEIENNKNNKKKTKLLQEHSQKLQIIDDQYQKLLEEQITQKERVEKQINHLQKEQQEVLMQISEEKETEIKNLNQKNSKDEQAITDQGLKAKSDISITKKKIMQQQQEAQDLKEQKQEYERQKEKLKIQNQELRDKIDGQKKIILERDRTIGEKEKIIYNLKKKAQDLEKFKFVLDHKIKELKRDIVPREDEITKMKQETNNMDQYLKELNAYNNYLGTVVDELYTTQETMKEDIKQQRQQISVQQVKISRFKDDVYSLAQHILDYDKLVDETERLFMKHVNDKEVKRQSVEGDIMMEYRSQKKNLEKLVNMFKKSLQKDNQIHKDDKIRIMKDNVDLIREINTLRKSIKDITKGQQSNIPDQKGQTQHMPLQTPQLSRKSISQPVLPPISKSAMFEGVTQQNEIQKSHTQINPELVEEKQKVLNSLQTDILELQKVYEALNYEKHNLTQA.

WD repeat units follow at residues 57–99 (NEYR…RRKN), 110–154 (YNIK…KCLG), 415–454 (NHTG…IKIS), 504–546 (SPFK…NPSQ), 551–590 (GHTG…QHQQ), 645–689 (LLDI…GKFT), and 694–733 (HDER…ARGM). A coiled-coil region spans residues 779 to 1000 (LNSRDDRIRQ…RDKIDGQKKI (222 aa)).

This sequence belongs to the CFAP57 family. As to quaternary structure, forms a heterodimer with CFAP57A. Associates with components of the nexin-dynein regulatory complex (N-DRC) and the CFAP184:CFAP263 complex.

The protein localises to the cell projection. It is found in the cilium. Its function is as follows. Associates with components of the nexin-dynein regulatory complex (N-DRC), a key regulator of ciliary/flagellar motility, and might act as an inner dynein arm (IDA) hub or linkage. The sequence is that of Cilia- and flagella-associated protein 57 C (CFAP57C) from Tetrahymena thermophila (strain SB210).